Reading from the N-terminus, the 385-residue chain is Probable peptidoglycan glycosyltransferase FtsW (385 aa).

The next 9 membrane-spanning stretches (helical) occupy residues 18–38 (LLWT…SASL), 57–77 (IYLA…PLAL), 81–101 (LRFV…IPGL), 111–131 (WIAL…CFVL), 157–177 (LLGV…VVVL), 195–215 (FLLI…AEPY), 280–300 (LGLL…WRVF), 311–331 (LLYH…QAFI), and 347–367 (LPFI…VGLI).

This sequence belongs to the SEDS family. FtsW subfamily.

The protein localises to the cell inner membrane. The enzyme catalyses [GlcNAc-(1-&gt;4)-Mur2Ac(oyl-L-Ala-gamma-D-Glu-L-Lys-D-Ala-D-Ala)](n)-di-trans,octa-cis-undecaprenyl diphosphate + beta-D-GlcNAc-(1-&gt;4)-Mur2Ac(oyl-L-Ala-gamma-D-Glu-L-Lys-D-Ala-D-Ala)-di-trans,octa-cis-undecaprenyl diphosphate = [GlcNAc-(1-&gt;4)-Mur2Ac(oyl-L-Ala-gamma-D-Glu-L-Lys-D-Ala-D-Ala)](n+1)-di-trans,octa-cis-undecaprenyl diphosphate + di-trans,octa-cis-undecaprenyl diphosphate + H(+). The protein operates within cell wall biogenesis; peptidoglycan biosynthesis. Its function is as follows. Peptidoglycan polymerase that is essential for cell division. This Alcanivorax borkumensis (strain ATCC 700651 / DSM 11573 / NCIMB 13689 / SK2) protein is Probable peptidoglycan glycosyltransferase FtsW.